Here is a 1071-residue protein sequence, read N- to C-terminus: Carbamoyl phosphate synthase large chain (1071 aa).

A carboxyphosphate synthetic domain region spans residues 1–403 (MPKRTDLKSI…SFQKALRGLE (403 aa)). The 196-residue stretch at 133–328 (KEAMEKIGLS…IAKVAANWAV (196 aa)) folds into the ATP-grasp 1 domain. Residues R169, G175, G176, Q208, V210, E215, G241, V242, H243, Q285, and E299 each coordinate ATP. 3 residues coordinate Mg(2+): Q285, E299, and N301. 3 residues coordinate Mn(2+): Q285, E299, and N301. The tract at residues 404–548 (TGLCGFNPAR…YSTYEEECES (145 aa)) is oligomerization domain. The interval 549-930 (RPSDRKKVMI…AYYKAQLGAG (382 aa)) is carbamoyl phosphate synthetic domain. Residues 673–864 (QKVLNDLGLR…LAKVGARCMA (192 aa)) form the ATP-grasp 2 domain. Residues R709, F748, L750, E755, G780, I781, H782, S783, Q823, and E835 each coordinate ATP. 3 residues coordinate Mg(2+): Q823, E835, and N837. 3 residues coordinate Mn(2+): Q823, E835, and N837. An MGS-like domain is found at 931–1071 (ERLNPTGKIF…ELHGRLKNRN (141 aa)). Residues 931 to 1071 (ERLNPTGKIF…ELHGRLKNRN (141 aa)) are allosteric domain.

This sequence belongs to the CarB family. In terms of assembly, composed of two chains; the small (or glutamine) chain promotes the hydrolysis of glutamine to ammonia, which is used by the large (or ammonia) chain to synthesize carbamoyl phosphate. Tetramer of heterodimers (alpha,beta)4. Requires Mg(2+) as cofactor. It depends on Mn(2+) as a cofactor.

The enzyme catalyses hydrogencarbonate + L-glutamine + 2 ATP + H2O = carbamoyl phosphate + L-glutamate + 2 ADP + phosphate + 2 H(+). It carries out the reaction hydrogencarbonate + NH4(+) + 2 ATP = carbamoyl phosphate + 2 ADP + phosphate + 2 H(+). The protein operates within amino-acid biosynthesis; L-arginine biosynthesis; carbamoyl phosphate from bicarbonate: step 1/1. It participates in pyrimidine metabolism; UMP biosynthesis via de novo pathway; (S)-dihydroorotate from bicarbonate: step 1/3. Its function is as follows. Large subunit of the glutamine-dependent carbamoyl phosphate synthetase (CPSase). CPSase catalyzes the formation of carbamoyl phosphate from the ammonia moiety of glutamine, carbonate, and phosphate donated by ATP, constituting the first step of 2 biosynthetic pathways, one leading to arginine and/or urea and the other to pyrimidine nucleotides. The large subunit (synthetase) binds the substrates ammonia (free or transferred from glutamine from the small subunit), hydrogencarbonate and ATP and carries out an ATP-coupled ligase reaction, activating hydrogencarbonate by forming carboxy phosphate which reacts with ammonia to form carbamoyl phosphate. The chain is Carbamoyl phosphate synthase large chain from Neisseria gonorrhoeae.